The chain runs to 330 residues: Putative protein N-methyltransferase FAM86B2 (330 aa).

At methionine 1 the chain carries N-acetylmethionine. Residues tryptophan 139, 165 to 167, tryptophan 228, and alanine 247 each bind S-adenosyl-L-methionine; that span reads GSG.

It belongs to the class I-like SAM-binding methyltransferase superfamily. EEF2KMT family. As to quaternary structure, interacts with EEF2KMT.

This is Putative protein N-methyltransferase FAM86B2 (FAM86B2) from Homo sapiens (Human).